The sequence spans 185 residues: NEDD8-conjugating enzyme UBE2F (185 aa).

A disordered region spans residues 1–21 (MLTLASKLKRDDGVKGSRTTS). The interaction with uba3 stretch occupies residues 1-29 (MLTLASKLKRDDGVKGSRTTSTTLDSMRR). One can recognise a UBC core domain in the interval 32–185 (VRDRLLVKEV…VEDYIKRYAR (154 aa)). Cys-116 (glycyl thioester intermediate) is an active-site residue.

The protein belongs to the ubiquitin-conjugating enzyme family. UBE2F subfamily.

The catalysed reaction is [E1 NEDD8-activating enzyme]-S-[NEDD8 protein]-yl-L-cysteine + [E2 NEDD8-conjugating enzyme]-L-cysteine = [E1 NEDD8-activating enzyme]-L-cysteine + [E2 NEDD8-conjugating enzyme]-S-[NEDD8-protein]-yl-L-cysteine.. It functions in the pathway protein modification; protein neddylation. Its function is as follows. Accepts the ubiquitin-like protein NEDD8 from the UBA3-NAE1 E1 complex and catalyzes its covalent attachment to other proteins. Together with the E3 ubiquitin ligase rnf7/rbx2, specifically neddylates cullin-5 (cul5). Does not neddylate cul1, cul2, cul3, cul4a or cul4b. In Xenopus laevis (African clawed frog), this protein is NEDD8-conjugating enzyme UBE2F (ube2f).